The chain runs to 135 residues: Translation initiation factor 2 subunit beta (135 aa).

It belongs to the eIF-2-beta/eIF-5 family. Heterotrimer composed of an alpha, a beta and a gamma chain.

In terms of biological role, eIF-2 functions in the early steps of protein synthesis by forming a ternary complex with GTP and initiator tRNA. The chain is Translation initiation factor 2 subunit beta from Methanobrevibacter smithii (strain ATCC 35061 / DSM 861 / OCM 144 / PS).